The primary structure comprises 324 residues: Methionyl-tRNA formyltransferase (324 aa).

114-117 lines the (6S)-5,6,7,8-tetrahydrofolate pocket; that stretch reads SLLP.

It belongs to the Fmt family.

It carries out the reaction L-methionyl-tRNA(fMet) + (6R)-10-formyltetrahydrofolate = N-formyl-L-methionyl-tRNA(fMet) + (6S)-5,6,7,8-tetrahydrofolate + H(+). Its function is as follows. Attaches a formyl group to the free amino group of methionyl-tRNA(fMet). The formyl group appears to play a dual role in the initiator identity of N-formylmethionyl-tRNA by promoting its recognition by IF2 and preventing the misappropriation of this tRNA by the elongation apparatus. The chain is Methionyl-tRNA formyltransferase from Phocaeicola vulgatus (strain ATCC 8482 / DSM 1447 / JCM 5826 / CCUG 4940 / NBRC 14291 / NCTC 11154) (Bacteroides vulgatus).